A 338-amino-acid polypeptide reads, in one-letter code: Malate dehydrogenase, mitochondrial (338 aa).

A mitochondrion-targeting transit peptide spans 1-24; that stretch reads MLSALARPAGAALRRSFSTSAQNN. NAD(+) is bound by residues 31 to 37 and Asp57; that span reads GASGGIG. Residue Ser33 is glycosylated (O-linked (GalNAc...) serine). N6-acetyllysine; alternate occurs at positions 78 and 91. N6-succinyllysine; alternate is present on residues Lys78 and Lys91. Residues Arg104 and Arg110 each coordinate substrate. NAD(+) is bound by residues Asn117 and 140 to 142; that span reads ISN. Residue Asn142 coordinates substrate. Lys165 carries the post-translational modification N6-acetyllysine. Asp173 serves as the catalytic Proton relay. Residue Arg176 participates in substrate binding. N6-acetyllysine; alternate is present on Lys185. Position 185 is an N6-succinyllysine; alternate (Lys185). His200 serves as the catalytic Proton acceptor. N6-succinyllysine is present on Lys203. N6-acetyllysine; alternate occurs at positions 215 and 239. N6-succinyllysine; alternate is present on residues Lys215 and Lys239. Lys239 carries the post-translational modification N6-malonyllysine; alternate. Ser246 carries the phosphoserine modification. Met251 contacts NAD(+). Position 269 is an N6-succinyllysine (Lys269). N6-acetyllysine; alternate is present on residues Lys296, Lys301, Lys307, Lys314, and Lys324. N6-succinyllysine; alternate is present on residues Lys296, Lys301, Lys307, Lys314, and Lys324. At Lys307 the chain carries N6-malonyllysine; alternate. The residue at position 326 (Ser326) is a Phosphoserine. N6-acetyllysine; alternate is present on residues Lys328, Lys329, and Lys335. Lys328 carries the post-translational modification N6-succinyllysine; alternate. An N6-malonyllysine; alternate modification is found at Lys329. Position 335 is an N6-succinyllysine; alternate (Lys335).

This sequence belongs to the LDH/MDH superfamily. MDH type 1 family. In terms of assembly, homodimer. Post-translationally, acetylation is enhanced after treatment either with trichostin A (TSA) or with nicotinamide (NAM) with the appearance of tri- and tetraacetylations. Glucose also increases acetylation. Ubiquitously expressed. Highly expressed in skeletal muscle and heart. Also expressed in liver, ileum, colon, kidney and adipose tissue, and at very low levels in lung, pancreas, stomach and spleen.

It is found in the mitochondrion matrix. It carries out the reaction (S)-malate + NAD(+) = oxaloacetate + NADH + H(+). With respect to regulation, enzyme activity is enhanced by acetylation. The polypeptide is Malate dehydrogenase, mitochondrial (Felis catus (Cat)).